The primary structure comprises 79 residues: Cytochrome b (79 aa).

The next 3 helical transmembrane spans lie at 1–7, 31–52, and 67–79; these read TALLLAM, WLIR…YLHI, and WNIG…TLMA. 2 residues coordinate heme b: H37 and H51.

This sequence belongs to the cytochrome b family. The cytochrome bc1 complex contains 11 subunits: 3 respiratory subunits (MT-CYB, CYC1 and UQCRFS1), 2 core proteins (UQCRC1 and UQCRC2) and 6 low-molecular weight proteins (UQCRH/QCR6, UQCRB/QCR7, UQCRQ/QCR8, UQCR10/QCR9, UQCR11/QCR10 and a cleavage product of UQCRFS1). This cytochrome bc1 complex then forms a dimer. Heme b is required as a cofactor.

It is found in the mitochondrion inner membrane. Its function is as follows. Component of the ubiquinol-cytochrome c reductase complex (complex III or cytochrome b-c1 complex) that is part of the mitochondrial respiratory chain. The b-c1 complex mediates electron transfer from ubiquinol to cytochrome c. Contributes to the generation of a proton gradient across the mitochondrial membrane that is then used for ATP synthesis. The polypeptide is Cytochrome b (MT-CYB) (Corcorax melanoramphos (White-winged chough)).